We begin with the raw amino-acid sequence, 445 residues long: 2-oxoisovalerate dehydrogenase subunit alpha, mitochondrial (445 aa).

A mitochondrion-targeting transit peptide spans 1-45 (MAVAIAAARVWRLNRGLSQAALLLLRRPGARGLARSHPRRQQQQF). A disordered region spans residues 33-54 (LARSHPRRQQQQFSSLDDKPQF). The thiamine diphosphate site is built by Y158 and R159. A K(+)-binding site is contributed by S206. S207 contributes to the thiamine diphosphate binding site. P208, T211, and Q212 together coordinate K(+). E238 is a binding site for Mg(2+). Thiamine diphosphate is bound by residues G239, A240, and R265. Mg(2+)-binding residues include N267 and Y269. H336 provides a ligand contact to thiamine diphosphate. A Phosphoserine; by BCKDK modification is found at S337. T338 is modified (phosphothreonine). 2 positions are modified to phosphoserine: S339 and S347. N6-acetyllysine; alternate is present on K356. The residue at position 356 (K356) is an N6-succinyllysine; alternate. K380 is modified (N6-succinyllysine).

This sequence belongs to the BCKDHA family. As to quaternary structure, heterotetramer of 2 alpha/BCKDHA and 2 beta chains/BCKDHB that forms the branched-chain alpha-keto acid decarboxylase (E1) component of the BCKD complex. The branched-chain alpha-ketoacid dehydrogenase is a large complex composed of three major building blocks E1, E2 and E3. It is organized around E2, a 24-meric cubic core composed of DBT, to which are associated 6 to 12 copies of E1, and approximately 6 copies of the dehydrogenase E3, a DLD dimer. Interacts with PPM1K. Requires thiamine diphosphate as cofactor. Mg(2+) is required as a cofactor. Phosphorylated at Ser-337 by BCKDK and dephosphorylated by protein phosphatase PPM1K.

Its subcellular location is the mitochondrion matrix. The catalysed reaction is N(6)-[(R)-lipoyl]-L-lysyl-[protein] + 3-methyl-2-oxobutanoate + H(+) = N(6)-[(R)-S(8)-2-methylpropanoyldihydrolipoyl]-L-lysyl-[protein] + CO2. Functionally, together with BCKDHB forms the heterotetrameric E1 subunit of the mitochondrial branched-chain alpha-ketoacid dehydrogenase (BCKD) complex. The BCKD complex catalyzes the multi-step oxidative decarboxylation of alpha-ketoacids derived from the branched-chain amino-acids valine, leucine and isoleucine producing CO2 and acyl-CoA which is subsequently utilized to produce energy. The E1 subunit catalyzes the first step with the decarboxylation of the alpha-ketoacid forming an enzyme-product intermediate. A reductive acylation mediated by the lipoylamide cofactor of E2 extracts the acyl group from the E1 active site for the next step of the reaction. This is 2-oxoisovalerate dehydrogenase subunit alpha, mitochondrial (BCKDHA) from Pan troglodytes (Chimpanzee).